The sequence spans 132 residues: Small ribosomal subunit protein uS8c (132 aa).

The protein belongs to the universal ribosomal protein uS8 family. In terms of assembly, part of the 30S ribosomal subunit.

The protein localises to the plastid. It is found in the chloroplast. Its function is as follows. One of the primary rRNA binding proteins, it binds directly to 16S rRNA central domain where it helps coordinate assembly of the platform of the 30S subunit. This is Small ribosomal subunit protein uS8c (rps8) from Liriodendron tulipifera (Tuliptree).